A 390-amino-acid chain; its full sequence is Magnesium-protoporphyrin IX monomethyl ester [oxidative] cyclase (390 aa).

This sequence belongs to the AcsF family. Fe cation serves as cofactor.

The catalysed reaction is Mg-protoporphyrin IX 13-monomethyl ester + 3 NADPH + 3 O2 + 2 H(+) = 3,8-divinyl protochlorophyllide a + 3 NADP(+) + 5 H2O. It functions in the pathway porphyrin-containing compound metabolism; chlorophyll biosynthesis (light-independent). Functionally, catalyzes the formation of the isocyclic ring in chlorophyll biosynthesis. Mediates the cyclase reaction, which results in the formation of divinylprotochlorophyllide (Pchlide) characteristic of all chlorophylls from magnesium-protoporphyrin IX 13-monomethyl ester (MgPMME). This chain is Magnesium-protoporphyrin IX monomethyl ester [oxidative] cyclase, found in Prochlorococcus marinus (strain MIT 9215).